The primary structure comprises 688 residues: Coiled-coil domain-containing protein 157 (688 aa).

The span at 143–153 (ANQGETLTSKP) shows a compositional bias: polar residues. Disordered stretches follow at residues 143–162 (ANQG…PAGS), 168–189 (AQLV…ERDS), 322–341 (QAAR…QWER), 366–385 (QQRE…QAEA), and 592–688 (QGAE…ERPT). The stretch at 288-572 (KLVGLLRAQL…LSKIREVAQQ (285 aa)) forms a coiled coil. Positions 369–382 (ESTQAVESKAQQLQ) are enriched in polar residues. Residues 671–680 (SPSSGRASPA) show a composition bias toward low complexity.

The protein is Coiled-coil domain-containing protein 157 (CCDC157) of Bos taurus (Bovine).